The chain runs to 180 residues: Centromere protein M (180 aa).

In terms of assembly, component of the CENPA-NAC complex, at least composed of CENPA, CENPC, CENPH, CENPM, CENPN, CENPT and CENPU. The CENPA-NAC complex interacts with the CENPA-CAD complex, composed of CENPI, CENPK, CENPL, CENPO, CENPP, CENPQ, CENPR and CENPS.

The protein resides in the nucleus. Its subcellular location is the cytoplasm. The protein localises to the chromosome. It localises to the centromere. It is found in the kinetochore. Component of the CENPA-NAC (nucleosome-associated) complex, a complex that plays a central role in assembly of kinetochore proteins, mitotic progression and chromosome segregation. The CENPA-NAC complex recruits the CENPA-CAD (nucleosome distal) complex and may be involved in incorporation of newly synthesized CENPA into centromeres. In Bos taurus (Bovine), this protein is Centromere protein M (CENPM).